The chain runs to 132 residues: Small ribosomal subunit protein uS8 (132 aa).

Belongs to the universal ribosomal protein uS8 family. In terms of assembly, part of the 30S ribosomal subunit. Contacts proteins S5 and S12.

In terms of biological role, one of the primary rRNA binding proteins, it binds directly to 16S rRNA central domain where it helps coordinate assembly of the platform of the 30S subunit. The chain is Small ribosomal subunit protein uS8 from Caulobacter sp. (strain K31).